Reading from the N-terminus, the 361-residue chain is Septin-12 (361 aa).

Residues 45–316 (MGFEFNIMVV…ENYRIIRLKE (272 aa)) form the Septin-type G domain. Positions 45 to 318 (MGFEFNIMVV…YRIIRLKESH (274 aa)) are interaction with SEPTIN7. The segment at 55 to 62 (GQSGLGKS) is G1 motif. Residues 55–62 (GQSGLGKS), Thr88, Gly114, 194–202 (RADSLTIEE), Gly250, and Arg265 each bind GTP. Positions 111-114 (DTPG) are G3 motif. Positions 193–196 (ARAD) are G4 motif. The self-association (via N-terminus) to polymerize octameric septin 12-7-6-2/4-2/4-6-7-12 filaments stretch occupies residues 257–361 (VNGRCVLGRK…WAEDNSDEDF (105 aa)). The segment at 333–361 (PPPAPTGTRASPGPAKMCRWAEDNSDEDF) is disordered. The span at 338–347 (TGTRASPGPA) shows a compositional bias: low complexity.

This sequence belongs to the TRAFAC class TrmE-Era-EngA-EngB-Septin-like GTPase superfamily. Septin GTPase family. In terms of assembly, septins polymerize into heterooligomeric protein complexes that form filaments, and can associate with cellular membranes, actin filaments and microtubules. GTPase activity is required for filament formation. Interacts with SEPTIN6 and SEPTIN11. Component of a octameric complex consisting of SEPTIN12, SEPTIN7, SEPTIN6 and SEPTIN2 or SEPTIN4 in the order 12-7-6-2-2-6-7-12 or 12-7-6-4-4-6-7-12 and located in the sperm annulus; the octamer polymerizes into filaments via the SEPTIN12 N- and C-termini; the SEPTIN12:SEPTIN7 association is mediated by the GTP-binding domains. Interacts with SPAG4 and LMNB1. Associates with alpha- and beta-tubulins.

The protein resides in the cytoplasm. The protein localises to the cytoskeleton. It is found in the spindle. It localises to the cell projection. Its subcellular location is the cilium. The protein resides in the flagellum. In terms of biological role, filament-forming cytoskeletal GTPase. May play a role in cytokinesis (Potential). Involved in spermatogenesis. Involved in the morphogenesis of sperm heads and the elongation of sperm tails probably implicating the association with alpha- and beta-tubulins. Forms a filamentous structure with SEPTIN7, SEPTIN6, SEPTIN2 and probably SEPTIN4 at the sperm annulus which is required for the structural integrity and motility of the sperm tail during postmeiotic differentiation. This Bos taurus (Bovine) protein is Septin-12.